The chain runs to 116 residues: Large ribosomal subunit protein bL17 (116 aa).

Belongs to the bacterial ribosomal protein bL17 family. As to quaternary structure, part of the 50S ribosomal subunit. Contacts protein L32.

The polypeptide is Large ribosomal subunit protein bL17 (Dictyoglomus thermophilum (strain ATCC 35947 / DSM 3960 / H-6-12)).